The chain runs to 154 residues: Putative pre-16S rRNA nuclease (154 aa).

It belongs to the YqgF nuclease family.

The protein resides in the cytoplasm. In terms of biological role, could be a nuclease involved in processing of the 5'-end of pre-16S rRNA. This Pelotomaculum thermopropionicum (strain DSM 13744 / JCM 10971 / SI) protein is Putative pre-16S rRNA nuclease.